The chain runs to 128 residues: Diacylglycerol kinase (128 aa).

Glutamate 34 provides a ligand contact to a divalent metal cation. Transmembrane regions (helical) follow at residues 35 to 55 and 58 to 78; these read SAFRQIVILALFCIVLASYLA and FLEWGLLILPCFLSVVVELIN. The active-site Proton acceptor is glutamate 75. Glutamate 82 serves as a coordination point for a divalent metal cation. A helical transmembrane segment spans residues 107-127; sequence QLIGLIFWTLIWGRYLLALYL.

The protein belongs to the bacterial diacylglycerol kinase family. It depends on Mg(2+) as a cofactor.

It is found in the cell inner membrane. It carries out the reaction a 1,2-diacyl-sn-glycerol + ATP = a 1,2-diacyl-sn-glycero-3-phosphate + ADP + H(+). Its function is as follows. Catalyzes the ATP-dependent phosphorylation of sn-l,2-diacylglycerol (DAG) to phosphatidic acid. Involved in the recycling of diacylglycerol produced as a by-product during membrane-derived oligosaccharide (MDO) biosynthesis. This Helicobacter pylori (strain ATCC 700392 / 26695) (Campylobacter pylori) protein is Diacylglycerol kinase (dgkA).